We begin with the raw amino-acid sequence, 301 residues long: Probable alpha-L-glutamate ligase (301 aa).

In terms of domain architecture, ATP-grasp spans 104-287; that stretch reads LQLLSRKGIG…VAGIIIEYLE (184 aa). Residues K141, 178–179, D187, and 211–213 contribute to the ATP site; these read EY and RSN. The Mg(2+) site is built by D248, E260, and N262. Mn(2+) contacts are provided by D248, E260, and N262.

Belongs to the RimK family. Requires Mg(2+) as cofactor. Mn(2+) is required as a cofactor.

The sequence is that of Probable alpha-L-glutamate ligase from Azotobacter vinelandii (strain DJ / ATCC BAA-1303).